Consider the following 330-residue polypeptide: G-protein coupled receptor 157 (330 aa).

At 1–15 (MPTPAPPTELLPWER) the chain is on the extracellular side. Residues 16 to 36 (AVVLLSCVLSALGSGLLVATH) form a helical membrane-spanning segment. The Cytoplasmic portion of the chain corresponds to 37–48 (ALWPDLRSRARR). A helical membrane pass occupies residues 49–69 (LLLFLSLADLLSAASYFYGVL). The Extracellular segment spans residues 70-87 (QDFAGTSWDCVLQGALST). The chain crosses the membrane as a helical span at residues 88-108 (FANTSSFFWTVAIALYLYLNI). Residues 109–119 (VRATRGPCTDH) are Cytoplasmic-facing. Residues 120–140 (LVWAFHLISWGVPLAITVAAV) traverse the membrane as a helical segment. The Extracellular portion of the chain corresponds to 141 to 166 (CLKKIGYDASDVSVGWCWINLEAEDR). The helical transmembrane segment at 167–187 (VLWMLLTGKLWEMLAYILLPL) threads the bilayer. The Cytoplasmic portion of the chain corresponds to 188 to 227 (LYLLVRKHINRAHQALSEYRPIWEGRQLQRGSPTSMADKK). A helical transmembrane segment spans residues 228–250 (LILIPFIFICLRVWSTVRFVLTL). Over 251–259 (CGSPVVQAP) the chain is Extracellular. The helical transmembrane segment at 260-282 (VLVVLHGIGNTFQGGANCIMFVL) threads the bilayer. At 283–330 (CTRAVRTRLFSLCCCYPRPPTQNPPGASIPPKMGESQESRRTPEVPST) the chain is on the cytoplasmic side. Positions 303–330 (TQNPPGASIPPKMGESQESRRTPEVPST) are disordered. Residues 317–330 (ESQESRRTPEVPST) show a composition bias toward basic and acidic residues.

This sequence belongs to the G-protein coupled receptor 2 family.

The protein localises to the cell projection. It localises to the cilium membrane. Its function is as follows. Orphan receptor that promotes neuronal differentiation of radial glial progenitors (RGPs). The activity of this receptor is mediated by a G(q)-protein that activates a phosphatidylinositol-calcium second messenger. The protein is G-protein coupled receptor 157 (Gpr157) of Rattus norvegicus (Rat).